We begin with the raw amino-acid sequence, 154 residues long: Putative pre-16S rRNA nuclease (154 aa).

Belongs to the YqgF nuclease family.

It is found in the cytoplasm. Its function is as follows. Could be a nuclease involved in processing of the 5'-end of pre-16S rRNA. In Rickettsia rickettsii (strain Iowa), this protein is Putative pre-16S rRNA nuclease.